The following is a 1213-amino-acid chain: MDPPAGAARRLLCPALLLLLLPPPPLLLLPPPPASVRLVAATEPPGGPPGQGAERILAVPVRTDAQGRLVSHVVSLETAGAGVRARRAALDQTSGLPGGAAQDPGGRLFYNLTVFGRDLHLRLRPNARLVAPGATVEWQGETGDTRVEPLLGSCLYVGDVADLPKASSVALSNCDGLAGLIRMEEEEFFIEPLEKGQTDQEAEQGRVHVVYRRPPTPKPPPVSEPQALDTGVSQGNLDSLSRALGVLEERINSSRRRVRRHATDDDYNIEVLLGVDDSVVQFHGKEHVQKYLLTLMNIVNEIYHDESLGAHINVVLVRIILLSHAKSMSLIEIGNPSQSLENVCRWAYLQQKPDTDHDEYHDHAIFLTRQDFGPSGMQGYAPVTGMCHPVRSCTLNHEDGFSSAFVVAHETGHVLGMEHDGQGNRCGDEVRLGSIMAPLVQAAFHRFHWSRCSQQELSRYLHSYDCLRDDPFAHDWPALPQLPGLHYSMNEQCRFDFGLGYMMCTAFRTFDPCKQLWCSHPDNPYFCKTKKGPPLDGTMCAPGKHCFKGHCIWLTPDILKRDGNWGAWTPFGSCSRTCGTGVKFRTRQCDNPHPANGGRTCSGLAYDFQLCNPQDCPNSLADFREEQCQQWDLYFEHGDVQHHWLPHEHRDAKERCHLYCESKETGEVVSMKRMVHDGTRCSYKDAFSLCVRGDCRKVGCDGVIGSRKQEDKCGVCGGDNTHCKVVKGTFTRSPRKQDYIKMFEIPAGARHLLIQEADTTSHHLSVKNLETGKFILNEENHLDPNSRSFIAMGVEWEYRNEDERETLQTIGPLHGTITVLVIPEGDTRISLTYKYMIHEDSLNVDDNNVLEDDAVRHEWALKKWSPCSKPCGGGSQFTKYGCRRRLDSKMVHRAFCSALAKPKAIRRACNPQECSQPVWVTGEWEPCTQSCGRTGMQVRSVRCIQPLHNNTTRSVHTKHCNDHRPESRRACNRELCPGRWRAGSWSQCSVTCGNGTQERPVLCRTADDNFGVCREERPETARICRLAPCPRNGSDPSKKSYVVQWLSRPDPDSPIQKISSKDQCQGDKSMFCRMEVLSRYCSIPSYNKLCCKSCNPPRNLSNTEDGGVEPPPGKHNDIDVFMPTLPGPTVATQVQPSPGPPLEAPLNVSSTNATEDHPETNAVDVPYKIHGVDEEVPSPNLIPRRPSLYVKTRNQRIQELINAVQRKEKPGKF.

Positions 1–28 (MDPPAGAARRLLCPALLLLLLPPPPLLL) are cleaved as a signal peptide. A propeptide spanning residues 29–260 (LPPPPASVRL…INSSRRRVRR (232 aa)) is cleaved from the precursor. Asn111 carries an N-linked (GlcNAc...) asparagine glycan. Positions 211 to 232 (YRRPPTPKPPPVSEPQALDTGV) are disordered. Over residues 214–223 (PPTPKPPPVS) the composition is skewed to pro residues. A glycan (N-linked (GlcNAc...) asparagine) is linked at Asn252. Residues 267-471 (YNIEVLLGVD…HSYDCLRDDP (205 aa)) form the Peptidase M12B domain. 10 disulfide bridges follow: Cys344-Cys393, Cys387-Cys466, Cys426-Cys452, Cys493-Cys518, Cys504-Cys527, Cys513-Cys546, Cys540-Cys551, Cys574-Cys611, Cys578-Cys616, and Cys589-Cys601. His409 serves as a coordination point for Zn(2+). Glu410 is a catalytic residue. Zn(2+) is bound by residues His413 and His419. Residues 480 to 560 (PQLPGLHYSM…CIWLTPDILK (81 aa)) enclose the Disintegrin domain. A TSP type-1 1 domain is found at 561-617 (RDGNWGAWTPFGSCSRTCGTGVKFRTRQCDNPHPANGGRTCSGLAYDFQLCNPQDCP). The Cell attachment site signature appears at 692-694 (RGD). Positions 723–851 (CKVVKGTFTR…LNVDDNNVLE (129 aa)) are spacer. 3 consecutive TSP type-1 domains span residues 855–913 (VRHE…NPQE), 915–975 (SQPV…NREL), and 976–1030 (CPGR…APCP). Residues Asn949, Asn950, and Asn994 are each glycosylated (N-linked (GlcNAc...) asparagine). 3 disulfide bridges follow: Cys988–Cys1024, Cys992–Cys1029, and Cys1003–Cys1013. N-linked (GlcNAc...) asparagine glycosylation occurs at Asn1032. Residues 1060-1098 (SKDQCQGDKSMFCRMEVLSRYCSIPSYNKLCCKSCNPPR) form the PLAC domain. N-linked (GlcNAc...) asparagine glycosylation is found at Asn1099, Asn1147, and Asn1152.

May belong to a multimeric complex. Binds specifically to collagen type XIV. Zn(2+) is required as a cofactor. Post-translationally, the precursor is cleaved by a furin endopeptidase. In terms of processing, glycosylated. Can be O-fucosylated by POFUT2 on a serine or a threonine residue found within the consensus sequence C1-X(2)-(S/T)-C2-G of the TSP type-1 repeat domains where C1 and C2 are the first and second cysteine residue of the repeat, respectively. Fucosylated repeats can then be further glycosylated by the addition of a beta-1,3-glucose residue by the glucosyltransferase, B3GALTL. Fucosylation mediates the efficient secretion of ADAMTS family members. Can also be C-glycosylated with one or two mannose molecules on tryptophan residues within the consensus sequence W-X-X-W of the TPRs, and N-glycosylated. These other glycosylations can also facilitate secretion.

The protein resides in the secreted. Its subcellular location is the extracellular space. It localises to the extracellular matrix. The catalysed reaction is Cleaves the N-propeptide of collagen chain alpha1(I) at Pro-|-Gln and of alpha1(II) and alpha2(I) at Ala-|-Gln.. In terms of biological role, cleaves the propeptides of type I and II collagen prior to fibril assembly. Does not act on type III collagen. Cleaves lysyl oxidase LOX at a site downstream of its propeptide cleavage site to produce a short LOX form with reduced collagen-binding activity. In Mus musculus (Mouse), this protein is A disintegrin and metalloproteinase with thrombospondin motifs 2 (Adamts2).